The following is a 1221-amino-acid chain: DNA-directed RNA polymerase subunit beta' (1221 aa).

4 residues coordinate Zn(2+): Cys60, Cys62, Cys75, and Cys78. 3 residues coordinate Mg(2+): Asp449, Asp451, and Asp453. 4 residues coordinate Zn(2+): Cys821, Cys896, Cys903, and Cys906.

It belongs to the RNA polymerase beta' chain family. In terms of assembly, the RNAP catalytic core consists of 2 alpha, 1 beta, 1 beta' and 1 omega subunit. When a sigma factor is associated with the core the holoenzyme is formed, which can initiate transcription. Requires Mg(2+) as cofactor. The cofactor is Zn(2+).

It catalyses the reaction RNA(n) + a ribonucleoside 5'-triphosphate = RNA(n+1) + diphosphate. In terms of biological role, DNA-dependent RNA polymerase catalyzes the transcription of DNA into RNA using the four ribonucleoside triphosphates as substrates. This chain is DNA-directed RNA polymerase subunit beta', found in Lactobacillus delbrueckii subsp. bulgaricus (strain ATCC BAA-365 / Lb-18).